Here is a 231-residue protein sequence, read N- to C-terminus: Small ribosomal subunit protein uS2c (231 aa).

The protein belongs to the universal ribosomal protein uS2 family.

It is found in the plastid. The protein localises to the chloroplast. The protein is Small ribosomal subunit protein uS2c (rps2) of Gracilaria tenuistipitata var. liui (Red alga).